The following is a 245-amino-acid chain: Carbohydrate deacetylase (245 aa).

Histidine 59 and histidine 125 together coordinate Mg(2+).

This sequence belongs to the YdjC deacetylase family. As to quaternary structure, homodimer. The cofactor is Mg(2+).

Probably catalyzes the deacetylation of acetylated carbohydrates an important step in the degradation of oligosaccharides. This chain is Carbohydrate deacetylase, found in Listeria monocytogenes serotype 4b (strain CLIP80459).